A 452-amino-acid chain; its full sequence is Tubulin alpha-8 chain (452 aa).

Residues Q15, E74, S143, G147, T148, T182, N209, and N231 each contribute to the GTP site. Residue E74 participates in Mg(2+) binding. The active site involves E257.

The protein belongs to the tubulin family. Dimer of alpha and beta chains. A typical microtubule is a hollow water-filled tube with an outer diameter of 25 nm and an inner diameter of 15 nM. Alpha-beta heterodimers associate head-to-tail to form protofilaments running lengthwise along the microtubule wall with the beta-tubulin subunit facing the microtubule plus end conferring a structural polarity. Microtubules usually have 13 protofilaments but different protofilament numbers can be found in some organisms and specialized cells. Mg(2+) is required as a cofactor.

The protein resides in the cytoplasm. It localises to the cytoskeleton. The catalysed reaction is GTP + H2O = GDP + phosphate + H(+). In terms of biological role, tubulin is the major constituent of microtubules, a cylinder consisting of laterally associated linear protofilaments composed of alpha- and beta-tubulin heterodimers. Microtubules grow by the addition of GTP-tubulin dimers to the microtubule end, where a stabilizing cap forms. Below the cap, tubulin dimers are in GDP-bound state, owing to GTPase activity of alpha-tubulin. The polypeptide is Tubulin alpha-8 chain (tba-8) (Caenorhabditis elegans).